The sequence spans 763 residues: Pentatricopeptide repeat-containing protein At4g32430, mitochondrial (763 aa).

A mitochondrion-targeting transit peptide spans 1-38 (MTLLNYLHCNRSKSFLFQRFYSPYRIAHKLFDGSSQRN). 17 PPR repeats span residues 77 to 109 (DEVTLCLALKACRGDLKRGCQIHGFSTTSGFTS), 110 to 140 (FVCVSNAVMGMYRKAGRFDNALCIFENLVDP), 141 to 172 (DVVSWNTILSGFDDNQIALNFVVRMKSAGVVF), 173 to 207 (DAFTYSTALSFCVGSEGFLLGLQLQSTVVKTGLES), 208 to 238 (DLVVGNSFITMYSRSGSFRGARRVFDEMSFK), 239 to 274 (DMISWNSLLSGLSQEGTFGFEAVVIFRDMMREGVEL), 275 to 309 (DHVSFTSVITTCCHETDLKLARQIHGLCIKRGYES), 310 to 344 (LLEVGNILMSRYSKCGVLEAVKSVFHQMSERNVVS), 350 to 370 (SSNKDDAVSIFLNMRFDGVYP), 371 to 405 (NEVTFVGLINAVKCNEQIKEGLKIHGLCIKTGFVS), 406 to 436 (EPSVGNSFITLYAKFEALEDAKKAFEDITFR), 437 to 471 (EIISWNAMISGFAQNGFSHEALKMFLSAAAETMPN), 472 to 507 (EYTFGSVLNAIAFAEDISVKQGQRCHAHLLKLGLNS), 508 to 538 (CPVVSSALLDMYAKRGNIDESEKVFNEMSQK), 539 to 573 (NQFVWTSIISAYSSHGDFETVMNLFHKMIKENVAP), 574 to 604 (DLVTFLSVLTACNRKGMVDKGYEIFNMMIEV), and 610 to 640 (SHEHYSCMVDMLGRAGRLKEAEELMSEVPGG). Positions 645-720 (MLQSMLGSCR…EAGFSWIDVG (76 aa)) are type E motif. Residues 724-756 (GSLTMQGFSSGDKSHPKSDEIYRMVEIIGLEMN) are type E(+) motif.

Belongs to the PPR family. PCMP-E subfamily.

It is found in the mitochondrion. The chain is Pentatricopeptide repeat-containing protein At4g32430, mitochondrial (PCMP-E40) from Arabidopsis thaliana (Mouse-ear cress).